The sequence spans 452 residues: Keratin, type II cytoskeletal 80 (452 aa).

The tract at residues 1–82 (MAYRSCVVGF…DPAVQQQKNQ (82 aa)) is head. Serine 45 carries the phosphoserine modification. Residues 82–118 (QEKEEMKVLNDKFASLIGKVQALEQRNQLLETRWGFL) form a coil 1A region. In terms of domain architecture, IF rod spans 83–394 (EKEEMKVLND…KLMEGEESRM (312 aa)). Residues 119–135 (QGQGSATFDLSHHYETF) form a linker 1 region. The interval 136–227 (QGRLQEELRK…TVYEQELKDL (92 aa)) is coil 1B. The segment at 228 to 251 (TAQVKDVSVTVGLDSRCHIDLSGI) is linker 12. The segment at 252-390 (VEEVKAQYDA…ATYHKLMEGE (139 aa)) is coil 2. A tail region spans residues 391–452 (ESRMDLPSTT…YLSQESEASE (62 aa)). Polar residues-rich tracts occupy residues 411 to 421 (TTASKSGLSKT) and 443 to 452 (YLSQESEASE). The interval 411–452 (TTASKSGLSKTPSRKKKNRGGPVIKITEMSEKYLSQESEASE) is disordered.

Belongs to the intermediate filament family. As to quaternary structure, heterotetramer of two type I and two type II keratins.

The sequence is that of Keratin, type II cytoskeletal 80 (Krt80) from Rattus norvegicus (Rat).